The following is a 379-amino-acid chain: All-trans-retinol dehydrogenase [NAD(+)] ADH4 (379 aa).

N-acetylthreonine is present on Thr1. Positions 46, 68, 98, 101, 104, 112, and 179 each coordinate Zn(2+). NAD(+) contacts are provided by residues Gly204–Gly209, Asp228, Lys233, Val297–Val299, and Arg374.

It belongs to the zinc-containing alcohol dehydrogenase family. Class-II subfamily. In terms of assembly, homodimer. Zn(2+) is required as a cofactor.

It localises to the cytoplasm. It catalyses the reaction all-trans-retinol + NAD(+) = all-trans-retinal + NADH + H(+). It carries out the reaction 9-cis-retinol + NAD(+) = 9-cis-retinal + NADH + H(+). The enzyme catalyses 20-oxo-(5Z,8Z,11Z,14Z)-eicosatetraenoate + NAD(+) + H2O = (5Z,8Z,11Z,14Z)-eicosatetraenedioate + NADH + 2 H(+). The catalysed reaction is 20-hydroxy-(5Z,8Z,11Z,14Z)-eicosatetraenoate + NAD(+) = 20-oxo-(5Z,8Z,11Z,14Z)-eicosatetraenoate + NADH + H(+). It catalyses the reaction 1,4-benzoquinone + NADH + H(+) = hydroquinone + NAD(+). Its activity is regulated as follows. Oxidation of 20-HETE is inhibited by low concentrations of N-heptylformamide. Oxidation of 20-HETE is a decreased by 55-65% by either all-trans-retinol or all-trans-retinoic acid. Strongly inhibited by omega-hydroxy fatty acids. Functionally, catalyzes the NAD-dependent oxidation of either all-trans-retinol or 9-cis-retinol. Also oxidizes long chain omega-hydroxy fatty acids, such as 20-HETE, producing both the intermediate aldehyde, 20-oxoarachidonate and the end product, a dicarboxylic acid, (5Z,8Z,11Z,14Z)-eicosatetraenedioate. Also catalyzes the reduction of benzoquinones. This is All-trans-retinol dehydrogenase [NAD(+)] ADH4 from Struthio camelus (Common ostrich).